The sequence spans 303 residues: UDP-3-O-acyl-N-acetylglucosamine deacetylase (303 aa).

The Zn(2+) site is built by His78, His237, and Asp241. Residue His264 is the Proton donor of the active site.

It belongs to the LpxC family. It depends on Zn(2+) as a cofactor.

The enzyme catalyses a UDP-3-O-[(3R)-3-hydroxyacyl]-N-acetyl-alpha-D-glucosamine + H2O = a UDP-3-O-[(3R)-3-hydroxyacyl]-alpha-D-glucosamine + acetate. Its pathway is glycolipid biosynthesis; lipid IV(A) biosynthesis; lipid IV(A) from (3R)-3-hydroxytetradecanoyl-[acyl-carrier-protein] and UDP-N-acetyl-alpha-D-glucosamine: step 2/6. In terms of biological role, catalyzes the hydrolysis of UDP-3-O-myristoyl-N-acetylglucosamine to form UDP-3-O-myristoylglucosamine and acetate, the committed step in lipid A biosynthesis. This chain is UDP-3-O-acyl-N-acetylglucosamine deacetylase, found in Pseudomonas syringae pv. tomato (strain ATCC BAA-871 / DC3000).